Consider the following 354-residue polypeptide: S-adenosylmethionine:tRNA ribosyltransferase-isomerase (354 aa).

It belongs to the QueA family. In terms of assembly, monomer.

Its subcellular location is the cytoplasm. The catalysed reaction is 7-aminomethyl-7-carbaguanosine(34) in tRNA + S-adenosyl-L-methionine = epoxyqueuosine(34) in tRNA + adenine + L-methionine + 2 H(+). It participates in tRNA modification; tRNA-queuosine biosynthesis. Functionally, transfers and isomerizes the ribose moiety from AdoMet to the 7-aminomethyl group of 7-deazaguanine (preQ1-tRNA) to give epoxyqueuosine (oQ-tRNA). The sequence is that of S-adenosylmethionine:tRNA ribosyltransferase-isomerase from Azorhizobium caulinodans (strain ATCC 43989 / DSM 5975 / JCM 20966 / LMG 6465 / NBRC 14845 / NCIMB 13405 / ORS 571).